We begin with the raw amino-acid sequence, 301 residues long: Mitochondrial import receptor subunit TOM40 homolog (301 aa).

A disordered region spans residues 1 to 20 (MATPTESEFAAPIPQTNPGS).

Belongs to the Tom40 family. Forms part of the preprotein translocase complex of the outer mitochondrial membrane (TOM complex). Interacts with mitochondrial targeting sequences.

The protein resides in the mitochondrion outer membrane. Its function is as follows. Channel-forming protein essential for import of protein precursors into mitochondria. Specifically required for nnt-1 accumulation in the mitochondria and may be involved in the secretion of daf-28/insulin from the mitochondria. Required for embryonic and larval development. This Caenorhabditis briggsae protein is Mitochondrial import receptor subunit TOM40 homolog.